The primary structure comprises 318 residues: MIEIWTEKYRPKSLSEIYGEDENIQKLKSFVEKKEIPHLLFAGSVGTGKTSTAIALAIELFGDSWKENMVEMNASNENGIDVIRNKIKDIARIKPSNPLGFKILFLDEADQLTAEAQAALRRTMEIYSETTRFIFSCNYSSKIIPPIQSRTVVMRFRPVPDEYISRKLQEIAKNEGFQIDEESMHALVEVSAGDMRKAINVLQAVYTSGEISPKKIYEIIGYASPEKIQKMISRAINGLFDEAREIVDGMLIYDGLSGIDIVRSLHSYVRSSMISPKQKIEIIKALADAEFRIVEGSNDRIQLDALIAKLAEIGSRTD.

43–50 contacts ATP; sequence GSVGTGKT.

The protein belongs to the activator 1 small subunits family. RfcS subfamily. As to quaternary structure, heteromultimer composed of small subunits (RfcS) and large subunits (RfcL).

In terms of biological role, part of the RFC clamp loader complex which loads the PCNA sliding clamp onto DNA. In Thermoplasma acidophilum (strain ATCC 25905 / DSM 1728 / JCM 9062 / NBRC 15155 / AMRC-C165), this protein is Replication factor C small subunit.